A 335-amino-acid chain; its full sequence is Trans-3-hydroxy-L-proline dehydratase (335 aa).

Cysteine 91 acts as the Proton acceptor in catalysis. Substrate-binding positions include 92–93 (GH) and 256–257 (GS).

The protein belongs to the proline racemase family. Homodimer.

The enzyme catalyses trans-3-hydroxy-L-proline = 1-pyrroline-2-carboxylate + H2O. Its pathway is amino-acid degradation. In terms of biological role, catalyzes the dehydration of trans-3-hydroxy-L-proline (t3LHyp) to Delta(1)-pyrroline-2-carboxylate (Pyr2C). Together with LhpI, is involved in a t3LHyp degradation pathway to L-proline, which allows A.brasilense to grow on t3LHyp as a sole carbon source. In Azospirillum brasilense, this protein is Trans-3-hydroxy-L-proline dehydratase.